A 179-amino-acid chain; its full sequence is Replication restart protein DnaT (179 aa).

A disordered region spans residues 156-179; it reads GGLPKRDVNTVSEPDSQIPPGFRG.

Belongs to the DnaT family. Homooligomerizes. Interacts with PriB. Component of the replication restart primosome. Primosome assembly occurs via a 'hand-off' mechanism. PriA binds to replication forks, subsequently PriB then DnaT bind; DnaT then displaces ssDNA to generate the helicase loading substrate.

In terms of biological role, involved in the restart of stalled replication forks, which reloads the replicative helicase on sites other than the origin of replication. Can function in multiple replication restart pathways. Displaces ssDNA from a PriB-ssDNA complex. Probably forms a spiral filament on ssDNA. The protein is Replication restart protein DnaT of Escherichia coli O81 (strain ED1a).